The following is a 174-amino-acid chain: Inosine/xanthosine triphosphatase (174 aa).

Aspartate 68 is a binding site for Mg(2+). 68–69 (DA) contacts substrate.

It belongs to the YjjX NTPase family. As to quaternary structure, homodimer. Mg(2+) is required as a cofactor. It depends on Mn(2+) as a cofactor.

It carries out the reaction XTP + H2O = XDP + phosphate + H(+). The catalysed reaction is ITP + H2O = IDP + phosphate + H(+). In terms of biological role, phosphatase that hydrolyzes non-canonical purine nucleotides such as XTP and ITP to their respective diphosphate derivatives. Probably excludes non-canonical purines from DNA/RNA precursor pool, thus preventing their incorporation into DNA/RNA and avoiding chromosomal lesions. This is Inosine/xanthosine triphosphatase from Photobacterium profundum (strain SS9).